The chain runs to 1577 residues: Disco-interacting protein 2 homolog B-A (1577 aa).

In terms of domain architecture, DMAP1-binding spans 7-124 (DLAALPKEVR…PMPTKRRSAF (118 aa)). Disordered stretches follow at residues 109–148 (EEKM…GSLR), 173–204 (VQGS…QGQT), 217–239 (DTNS…DRNS), and 253–273 (SRGQ…AHSR). The segment covering 124-140 (FVQSPAENCTPPDTSSA) has biased composition (polar residues). Residues 176–187 (SSTSSSASSTLS) show a composition bias toward low complexity. Over residues 217-236 (DTNSSSGSVPPDVTSTAPQD) the composition is skewed to polar residues.

The protein belongs to the DIP2 family.

It is found in the cell projection. It localises to the dendrite. Its subcellular location is the axon. The protein localises to the perikaryon. Functionally, negatively regulates axonal outgrowth and is essential for normal synaptic transmission. Not required for regulation of axon polarity. Promotes acetylation of alpha-tubulin. The sequence is that of Disco-interacting protein 2 homolog B-A (dip2ba) from Danio rerio (Zebrafish).